The sequence spans 748 residues: Catalase-peroxidase (748 aa).

Residues 1 to 14 show a composition bias toward basic and acidic residues; sequence MTDTSDARPPHSDA. Residues 1 to 40 are disordered; the sequence is MTDTSDARPPHSDAKTASNSESENPAIDSPEPKSHAPLTN. Residues 112-239 constitute a cross-link (tryptophyl-tyrosyl-methioninium (Trp-Tyr) (with M-265)); that stretch reads WHAAGTYRIF…FGATTMGLIY (128 aa). The active-site Proton acceptor is His113. A cross-link (tryptophyl-tyrosyl-methioninium (Tyr-Met) (with W-112)) is located at residues 239–265; the sequence is YVNPEGPEGKPDPLAAAHDIRETFGRM. A heme b-binding site is contributed by His280.

This sequence belongs to the peroxidase family. Peroxidase/catalase subfamily. As to quaternary structure, homodimer or homotetramer. It depends on heme b as a cofactor. Formation of the three residue Trp-Tyr-Met cross-link is important for the catalase, but not the peroxidase activity of the enzyme.

It catalyses the reaction H2O2 + AH2 = A + 2 H2O. It carries out the reaction 2 H2O2 = O2 + 2 H2O. Bifunctional enzyme with both catalase and broad-spectrum peroxidase activity. In Mycolicibacterium gilvum (strain PYR-GCK) (Mycobacterium gilvum (strain PYR-GCK)), this protein is Catalase-peroxidase.